We begin with the raw amino-acid sequence, 104 residues long: Phosphoribosyl-ATP pyrophosphatase (104 aa).

This sequence belongs to the PRA-PH family.

Its subcellular location is the cytoplasm. It carries out the reaction 1-(5-phospho-beta-D-ribosyl)-ATP + H2O = 1-(5-phospho-beta-D-ribosyl)-5'-AMP + diphosphate + H(+). It functions in the pathway amino-acid biosynthesis; L-histidine biosynthesis; L-histidine from 5-phospho-alpha-D-ribose 1-diphosphate: step 2/9. The polypeptide is Phosphoribosyl-ATP pyrophosphatase (Nitrosococcus oceani (strain ATCC 19707 / BCRC 17464 / JCM 30415 / NCIMB 11848 / C-107)).